A 266-amino-acid polypeptide reads, in one-letter code: 3-methyl-2-oxobutanoate hydroxymethyltransferase (266 aa).

D45 and D84 together coordinate Mg(2+). 3-methyl-2-oxobutanoate contacts are provided by residues 45 to 46 (DS), D84, and K112. E114 contributes to the Mg(2+) binding site. Residue E181 is the Proton acceptor of the active site.

It belongs to the PanB family. Homodecamer; pentamer of dimers. Mg(2+) serves as cofactor.

The protein localises to the cytoplasm. The catalysed reaction is 3-methyl-2-oxobutanoate + (6R)-5,10-methylene-5,6,7,8-tetrahydrofolate + H2O = 2-dehydropantoate + (6S)-5,6,7,8-tetrahydrofolate. The protein operates within cofactor biosynthesis; (R)-pantothenate biosynthesis; (R)-pantoate from 3-methyl-2-oxobutanoate: step 1/2. Catalyzes the reversible reaction in which hydroxymethyl group from 5,10-methylenetetrahydrofolate is transferred onto alpha-ketoisovalerate to form ketopantoate. This is 3-methyl-2-oxobutanoate hydroxymethyltransferase from Pseudomonas putida (strain ATCC 700007 / DSM 6899 / JCM 31910 / BCRC 17059 / LMG 24140 / F1).